Reading from the N-terminus, the 687-residue chain is Variant-specific surface protein VSP4A1 (687 aa).

The first 14 residues, 1-14, serve as a signal peptide directing secretion; it reads MLLTAFYVVLGSFA. The Extracellular segment spans residues 15–660; it reads APCQQDGDHI…SGLSTGAIAG (646 aa). The chain crosses the membrane as a helical span at residues 661–681; sequence ISVAAIVVVGGLVGFLCWWFI. The Cytoplasmic segment spans residues 682–687; the sequence is CRGKAQ.

It belongs to the Giardia variant surface protein family. In terms of processing, O-glycosylated. The major glycan is a trisaccharide with Glc at the reducing terminus. Post-translationally, palmitoylated.

Its subcellular location is the cell membrane. The protein is Variant-specific surface protein VSP4A1 of Giardia intestinalis (Giardia lamblia).